The primary structure comprises 503 residues: 3-octaprenyl-4-hydroxybenzoate carboxy-lyase (503 aa).

Asn-176 lines the Mn(2+) pocket. Prenylated FMN is bound by residues 179–181, 193–195, and 198–199; these read IYR, RWL, and RG. Glu-242 lines the Mn(2+) pocket. The active-site Proton donor is the Asp-303.

This sequence belongs to the UbiD family. Homohexamer. The cofactor is prenylated FMN. It depends on Mn(2+) as a cofactor.

Its subcellular location is the cell membrane. The catalysed reaction is a 4-hydroxy-3-(all-trans-polyprenyl)benzoate + H(+) = a 2-(all-trans-polyprenyl)phenol + CO2. It participates in cofactor biosynthesis; ubiquinone biosynthesis. Functionally, catalyzes the decarboxylation of 3-octaprenyl-4-hydroxy benzoate to 2-octaprenylphenol, an intermediate step in ubiquinone biosynthesis. The sequence is that of 3-octaprenyl-4-hydroxybenzoate carboxy-lyase from Ralstonia nicotianae (strain ATCC BAA-1114 / GMI1000) (Ralstonia solanacearum).